Reading from the N-terminus, the 255-residue chain is Tachylectin-2 (255 aa).

The first 19 residues, 1–19 (MKFLLVVLGFIGFLKDGIT), serve as a signal peptide directing secretion. 5 WD repeats span residues 20-67 (VGGE…FLFL), 68-114 (SPGG…FLFF), 115-161 (DPNG…FLFF), 162-208 (HPNG…FLFF), and 209-255 (SSVG…FLFF).

As to quaternary structure, monomer.

It is found in the secreted. It localises to the cytoplasmic granule. Functionally, lectin that binds specifically to N-acetylglucosamine and N-acetylgalactosamine. Is part of the innate immunity host defense system of the horseshoe crab. This is Tachylectin-2 from Tachypleus tridentatus (Japanese horseshoe crab).